Reading from the N-terminus, the 227-residue chain is Cytochrome c oxidase subunit 2 (227 aa).

Topologically, residues 1–14 (MAYPLQLGLQDATS) are mitochondrial intermembrane. The helical transmembrane segment at 15-45 (PIMEELMNFHDHTLMIVFLISSLVLYIISLM) threads the bilayer. Over 46–59 (LTTKLTHTSTMDAQ) the chain is Mitochondrial matrix. Residues 60–87 (EVETIWTILPAAILVLIALPSLRILYMM) form a helical membrane-spanning segment. Over 88 to 227 (DEINNPVLTV…YFENWSASMI (140 aa)) the chain is Mitochondrial intermembrane. His-161, Cys-196, Glu-198, Cys-200, His-204, and Met-207 together coordinate Cu cation. Glu-198 is a binding site for Mg(2+). At Tyr-218 the chain carries Phosphotyrosine.

It belongs to the cytochrome c oxidase subunit 2 family. In terms of assembly, component of the cytochrome c oxidase (complex IV, CIV), a multisubunit enzyme composed of 14 subunits. The complex is composed of a catalytic core of 3 subunits MT-CO1, MT-CO2 and MT-CO3, encoded in the mitochondrial DNA, and 11 supernumerary subunits COX4I, COX5A, COX5B, COX6A, COX6B, COX6C, COX7A, COX7B, COX7C, COX8 and NDUFA4, which are encoded in the nuclear genome. The complex exists as a monomer or a dimer and forms supercomplexes (SCs) in the inner mitochondrial membrane with NADH-ubiquinone oxidoreductase (complex I, CI) and ubiquinol-cytochrome c oxidoreductase (cytochrome b-c1 complex, complex III, CIII), resulting in different assemblies (supercomplex SCI(1)III(2)IV(1) and megacomplex MCI(2)III(2)IV(2)). Found in a complex with TMEM177, COA6, COX18, COX20, SCO1 and SCO2. Interacts with TMEM177 in a COX20-dependent manner. Interacts with COX20. Interacts with COX16. Cu cation is required as a cofactor.

The protein localises to the mitochondrion inner membrane. The enzyme catalyses 4 Fe(II)-[cytochrome c] + O2 + 8 H(+)(in) = 4 Fe(III)-[cytochrome c] + 2 H2O + 4 H(+)(out). In terms of biological role, component of the cytochrome c oxidase, the last enzyme in the mitochondrial electron transport chain which drives oxidative phosphorylation. The respiratory chain contains 3 multisubunit complexes succinate dehydrogenase (complex II, CII), ubiquinol-cytochrome c oxidoreductase (cytochrome b-c1 complex, complex III, CIII) and cytochrome c oxidase (complex IV, CIV), that cooperate to transfer electrons derived from NADH and succinate to molecular oxygen, creating an electrochemical gradient over the inner membrane that drives transmembrane transport and the ATP synthase. Cytochrome c oxidase is the component of the respiratory chain that catalyzes the reduction of oxygen to water. Electrons originating from reduced cytochrome c in the intermembrane space (IMS) are transferred via the dinuclear copper A center (CU(A)) of subunit 2 and heme A of subunit 1 to the active site in subunit 1, a binuclear center (BNC) formed by heme A3 and copper B (CU(B)). The BNC reduces molecular oxygen to 2 water molecules using 4 electrons from cytochrome c in the IMS and 4 protons from the mitochondrial matrix. The polypeptide is Cytochrome c oxidase subunit 2 (MT-CO2) (Micaelamys namaquensis (Namaqua rock rat)).